A 2036-amino-acid chain; its full sequence is Transmembrane channel-like protein (2036 aa).

2 disordered regions span residues 1–178 and 194–243; these read MQND…IDDE and SVRG…ESTQ. Over 1-353 the chain is Cytoplasmic; the sequence is MQNDEEPAAA…GVASYFTFLR (353 aa). The span at 58–73 shows a compositional bias: low complexity; sequence VGSSSSNGNTSNVATG. A compositionally biased stretch (polar residues) spans 74 to 90; the sequence is ANSENNSGVTSPHQLSV. The segment covering 125–134 has biased composition (basic and acidic residues); that stretch reads ASQEDHRSYE. A compositionally biased stretch (acidic residues) spans 166 to 178; it reads FDEDGGGGDIDDE. Residues 198–208 are compositionally biased toward basic residues; that stretch reads YRGKRGSRSSR. The span at 216–225 shows a compositional bias: basic and acidic residues; the sequence is HVLDSVERRR. Residues 227-243 show a composition bias toward polar residues; the sequence is SVYTTSSEEGTNQESTQ. Residues 354–374 traverse the membrane as a helical segment; it reads WLMWVNIMIAIPLVAFVIGPE. At 375-395 the chain is on the extracellular side; sequence YFATKHGETDPRKRMSDPEAR. A helical membrane pass occupies residues 396-418; that stretch reads VAGNLFTFWEFEGYLKYSPMFYG. Topologically, residues 419–432 are cytoplasmic; it reads YYSSTSGISTSGYK. Residues 433 to 453 form a helical membrane-spanning segment; that stretch reads LPLAYFLTAVLVYIYSFVATL. The Extracellular portion of the chain corresponds to 454–526; it reads RKMAENSRNS…NRNWRVILQR (73 aa). Residues 527–547 form a helical membrane-spanning segment; that stretch reads ILVNILVMGLLGLSGATVVLL. Topologically, residues 548-567 are cytoplasmic; it reads VNHSEDLAKHDNWLSRNAVN. The chain crosses the membrane as a helical span at residues 568–588; that stretch reads VTMTLLSFFLPMIFEALGLFE. The Extracellular portion of the chain corresponds to 589–599; that stretch reads NWHPRQQLRLQ. Residues 600–620 traverse the membrane as a helical segment; it reads LARIMILNMLNLYSLMFSFIY. Topologically, residues 621 to 1308 are cytoplasmic; the sequence is KINSKEKPLQ…ILTLINNQGQ (688 aa). Disordered stretches follow at residues 789–839, 860–967, 996–1027, 1066–1143, and 1186–1205; these read TTAT…TEAT, KPLG…TDQA, FFTS…NATP, LRGR…EGSE, and GSTT…KQLT. Positions 870–885 are enriched in polar residues; that stretch reads IPNSTTNSATLSTIPA. A compositionally biased stretch (low complexity) spans 886–906; that stretch reads TLNTTNLPLNSTTKLTTTTST. A compositionally biased stretch (polar residues) spans 933-952; it reads TSDAPDNNSYSDITDYSSEP. A compositionally biased stretch (acidic residues) spans 953–967; that stretch reads SEIEDFDEQESTDQA. Low complexity-rich tracts occupy residues 1069 to 1083, 1091 to 1100, and 1107 to 1130; these read RITT…STTT, RTTTTELTST, and TTES…SSST. The helical transmembrane segment at 1309-1329 threads the bilayer; sequence VWMGIFFSPGLVLINLVKLMI. Over 1330–1358 the chain is Extracellular; sequence MMYFRSWIVLTCNVPHEVVFKASKSNNFY. Residues 1359 to 1379 traverse the membrane as a helical segment; it reads LSLLLTMLFLCVLPVGYAIVW. At 1380–1423 the chain is on the cytoplasmic side; sequence LRPSWHCGPFSEYNRIAEFITNTTRNALPKQLHEPLDYLTSSST. Residues 1424-1444 traverse the membrane as a helical segment; that stretch reads VIPLLLLLILIIYYLVSLTGA. Residues 1445–2036 are Extracellular-facing; sequence LREANQDLRT…RIDIENEHEK (592 aa). 3 disordered regions span residues 1527–1572, 1592–1841, and 1859–1990; these read LRKG…SRLQ, ERAR…SRQG, and KKDD…IPTI. Composition is skewed to basic and acidic residues over residues 1538-1566, 1614-1640, 1658-1668, 1727-1743, and 1777-1793; these read SFVR…DKRF, KETH…DKKD, SPKDNEHDPDT, HIVD…EDKP, and PEPE…ERSS. Polar residues predominate over residues 1806 to 1838; it reads NEPSGTEEQDRSLPSPTPSQGQGHHQRQLSVLS. Positions 1890–1899 are enriched in low complexity; the sequence is VLSSVSSSTA. Residues 1903-1914 are compositionally biased toward pro residues; it reads PPTPEPESPTPS. A compositionally biased stretch (polar residues) spans 1976 to 1990; it reads QDSQSSIWSDNIPTI.

It belongs to the TMC family. As to expression, expressed in multi-dendritic neurons of the labellum (md-L), which extend elaborate dendritic arbors innervating the bases of taste hairs (at protein level). In larvae, expressed in class I and class II dendritic arborization (da) neurons and bipolar dendrite (bd) neurons (at protein level). In adults, expressed in various sensory neurons including those in the mouth parts, olfactory neurons in the antenna, wing bristle neurons, haltere neurons, arista neurons, and many other sensory neurons, including a subset of chordotonal (Cho) neurons. Expressed in md-L axon terminals, including those that project into the subesophageal zone (SEZ). Also expressed in a small number of local neurons in the adult ventral nerve cord (VNC), and projections extending from a few neurons in the legs or wing hinges. In the adult mouth, expressed in a few multi-dendritic neurons of the ventral cibarial sensory organ (VCSO); the multiple elaborate dendritic branches form a brush-like structure that faces the luminal side of the food-passing tunnel. Also expressed in the oviduct and uterus of adult females.

It is found in the cell membrane. It localises to the cell projection. Its subcellular location is the dendrite. In terms of biological role, probable ion channel. Component of mechanosensitive neurons that participates in proprioception, sensing food texture, and directing egg-laying site selection (oviposition). Component of multi-dendritic neurons of the labellum (md-L) where it is required for sensing the hardness and viscosity of their food, enabling them to behaviorally discriminate their preferred softness and smoothness from harder and stickier food options. Required as part of oviposition site selection process to relay mechanosensory and chemosensory information on the hardness and sweetness of potential egg-laying substrates, thus ensuring females select the most optimal site for their eggs survival. Females determine the softest substrate for their eggs first by making a coarse evaluation of substrate hardness using mechanosensitive channels nan and Piezo in the leg tarsal bristles, followed by a much finer assessment using nan, iav and Tmc mechanosensitive channels on the labellum. This protein is required to sense subtle differences in substrate stiffness (between 0.25% and 0.3% agarose), likely acting in the md-L neurons. Also required in neurons on the labellum, including the md-Ls, and possibly in the brain, to inhibit discrimination of egg-laying substrates of different hardness if the substrate contains sucrose. During oviposition evaluation, activation of sweet neurons by sucrose enhances the activity of the Tmc neurons resulting in females losing their softness preference in favor of egg-laying sites that contain sucrose. Acts in the larvae peripheral sensory neurons, to contribute to proprioception and sensory feedback for normal forward crawling behavior. Required for the normal activity of the proprioceptive sensory dendrites, ddaE which show preferential responses to forward locomotion, and ddaD which show preferential responses to backward locomotion. The protein is Transmembrane channel-like protein of Drosophila melanogaster (Fruit fly).